The sequence spans 405 residues: Endo-1,4-beta-xylanase 5 (405 aa).

The signal sequence occupies residues 1-22 (MTRLATLITLAGLLAVSPGAYA). Residues Asn27 and Asn69 are each glycosylated (N-linked (GlcNAc...) asparagine). The 321-residue stretch at 32–352 (STGAEGLNSL…KPAYTSVSSL (321 aa)) folds into the GH10 domain. Glu166 serves as the catalytic Proton donor. A glycan (N-linked (GlcNAc...) asparagine) is linked at Asn171. Residue Glu273 is the Nucleophile of the active site. A disulfide bridge connects residues Cys302 and Cys308. Residue Gly380 is the site of GPI-anchor amidated glycine attachment. A propeptide spans 381–405 (AGRETVSIAGLTLALSSLAFGMFML) (removed in mature form).

Belongs to the glycosyl hydrolase 10 (cellulase F) family.

It is found in the cell membrane. The protein resides in the secreted. The catalysed reaction is Endohydrolysis of (1-&gt;4)-beta-D-xylosidic linkages in xylans.. It participates in glycan degradation; xylan degradation. Functionally, endo-1,4-beta-xylanase involved in the hydrolysis of xylan, a major structural heterogeneous polysaccharide found in plant biomass representing the second most abundant polysaccharide in the biosphere, after cellulose. This is Endo-1,4-beta-xylanase 5 (XYL5) from Pyricularia grisea (Crabgrass-specific blast fungus).